The primary structure comprises 173 residues: Large ribosomal subunit protein bL9 (173 aa).

It belongs to the bacterial ribosomal protein bL9 family.

In terms of biological role, binds to the 23S rRNA. The protein is Large ribosomal subunit protein bL9 of Rickettsia bellii (strain OSU 85-389).